A 132-amino-acid polypeptide reads, in one-letter code: ATP synthase epsilon chain (132 aa).

The protein belongs to the ATPase epsilon chain family. F-type ATPases have 2 components, CF(1) - the catalytic core - and CF(0) - the membrane proton channel. CF(1) has five subunits: alpha(3), beta(3), gamma(1), delta(1), epsilon(1). CF(0) has three main subunits: a, b and c.

The protein localises to the cell membrane. In terms of biological role, produces ATP from ADP in the presence of a proton gradient across the membrane. In Clostridium kluyveri (strain NBRC 12016), this protein is ATP synthase epsilon chain.